We begin with the raw amino-acid sequence, 171 residues long: Shikimate kinase (171 aa).

Residue 14-19 (GAGKST) coordinates ATP. Residue serine 18 participates in Mg(2+) binding. Residues aspartate 36, arginine 60, and glycine 82 each contribute to the substrate site. Arginine 120 contributes to the ATP binding site. Arginine 139 is a substrate binding site. Glutamine 156 is a binding site for ATP.

Belongs to the shikimate kinase family. In terms of assembly, monomer. Mg(2+) serves as cofactor.

The protein localises to the cytoplasm. It carries out the reaction shikimate + ATP = 3-phosphoshikimate + ADP + H(+). The protein operates within metabolic intermediate biosynthesis; chorismate biosynthesis; chorismate from D-erythrose 4-phosphate and phosphoenolpyruvate: step 5/7. In terms of biological role, catalyzes the specific phosphorylation of the 3-hydroxyl group of shikimic acid using ATP as a cosubstrate. In Shewanella amazonensis (strain ATCC BAA-1098 / SB2B), this protein is Shikimate kinase.